Reading from the N-terminus, the 359-residue chain is 3-isopropylmalate dehydrogenase (359 aa).

Residue 74-85 (GPKWGTGSVRPE) participates in NAD(+) binding. Substrate-binding residues include R92, R102, R131, and D220. Residues D220, D245, and D249 each contribute to the Mg(2+) site. NAD(+) is bound at residue 284–295 (GSAPDLPANKVN).

Belongs to the isocitrate and isopropylmalate dehydrogenases family. In terms of assembly, homodimer. Requires Mg(2+) as cofactor. Mn(2+) serves as cofactor.

It localises to the cytoplasm. It catalyses the reaction (2R,3S)-3-isopropylmalate + NAD(+) = 4-methyl-2-oxopentanoate + CO2 + NADH. The protein operates within amino-acid biosynthesis; L-leucine biosynthesis; L-leucine from 3-methyl-2-oxobutanoate: step 3/4. In terms of biological role, catalyzes the oxidation of 3-carboxy-2-hydroxy-4-methylpentanoate (3-isopropylmalate) to 3-carboxy-4-methyl-2-oxopentanoate. The product decarboxylates to 4-methyl-2 oxopentanoate. The sequence is that of 3-isopropylmalate dehydrogenase (LEU2) from Kluyveromyces marxianus (Yeast).